The sequence spans 206 residues: Holliday junction branch migration complex subunit RuvA (206 aa).

Residues 1–64 are domain I; that stretch reads MIGRLTGNLV…ETSQQLFGFI (64 aa). The interval 65–142 is domain II; the sequence is DQQDREFFRM…SWQVTPSVDA (78 aa). The tract at residues 143 to 154 is flexible linker; sequence TGSLVALDSAAP. A domain III region spans residues 155–206; sequence SQNAIVAEAESALVALGYKPVEASKAVARVTSDEITRSEDLIRLALRNMIPA.

The protein belongs to the RuvA family. As to quaternary structure, homotetramer. Forms an RuvA(8)-RuvB(12)-Holliday junction (HJ) complex. HJ DNA is sandwiched between 2 RuvA tetramers; dsDNA enters through RuvA and exits via RuvB. An RuvB hexamer assembles on each DNA strand where it exits the tetramer. Each RuvB hexamer is contacted by two RuvA subunits (via domain III) on 2 adjacent RuvB subunits; this complex drives branch migration. In the full resolvosome a probable DNA-RuvA(4)-RuvB(12)-RuvC(2) complex forms which resolves the HJ.

Its subcellular location is the cytoplasm. Functionally, the RuvA-RuvB-RuvC complex processes Holliday junction (HJ) DNA during genetic recombination and DNA repair, while the RuvA-RuvB complex plays an important role in the rescue of blocked DNA replication forks via replication fork reversal (RFR). RuvA specifically binds to HJ cruciform DNA, conferring on it an open structure. The RuvB hexamer acts as an ATP-dependent pump, pulling dsDNA into and through the RuvAB complex. HJ branch migration allows RuvC to scan DNA until it finds its consensus sequence, where it cleaves and resolves the cruciform DNA. This chain is Holliday junction branch migration complex subunit RuvA, found in Teredinibacter turnerae (strain ATCC 39867 / T7901).